The primary structure comprises 224 residues: Leucyl/phenylalanyl-tRNA--protein transferase (224 aa).

The protein belongs to the L/F-transferase family.

It is found in the cytoplasm. The enzyme catalyses N-terminal L-lysyl-[protein] + L-leucyl-tRNA(Leu) = N-terminal L-leucyl-L-lysyl-[protein] + tRNA(Leu) + H(+). It catalyses the reaction N-terminal L-arginyl-[protein] + L-leucyl-tRNA(Leu) = N-terminal L-leucyl-L-arginyl-[protein] + tRNA(Leu) + H(+). It carries out the reaction L-phenylalanyl-tRNA(Phe) + an N-terminal L-alpha-aminoacyl-[protein] = an N-terminal L-phenylalanyl-L-alpha-aminoacyl-[protein] + tRNA(Phe). In terms of biological role, functions in the N-end rule pathway of protein degradation where it conjugates Leu, Phe and, less efficiently, Met from aminoacyl-tRNAs to the N-termini of proteins containing an N-terminal arginine or lysine. The polypeptide is Leucyl/phenylalanyl-tRNA--protein transferase (Rhodopseudomonas palustris (strain HaA2)).